The sequence spans 415 residues: Lipoyl synthase, mitochondrial (415 aa).

The transit peptide at 1–32 (MAVSTSHFRSLCASSRSLSRTGIVAPISCRGY) directs the protein to the mitochondrion. The tract at residues 30–50 (RGYATTEPSPSATSTTTTTTA) is disordered. Over residues 33-49 (ATTEPSPSATSTTTTTT) the composition is skewed to low complexity. Cys132, Cys137, Cys143, Cys163, Cys167, Cys170, and Ser378 together coordinate [4Fe-4S] cluster. Residues 146 to 367 (GSDKSAATAT…RQRALDMGFL (222 aa)) enclose the Radical SAM core domain.

The protein belongs to the radical SAM superfamily. Lipoyl synthase family. [4Fe-4S] cluster serves as cofactor.

The protein resides in the mitochondrion. The enzyme catalyses [[Fe-S] cluster scaffold protein carrying a second [4Fe-4S](2+) cluster] + N(6)-octanoyl-L-lysyl-[protein] + 2 oxidized [2Fe-2S]-[ferredoxin] + 2 S-adenosyl-L-methionine + 4 H(+) = [[Fe-S] cluster scaffold protein] + N(6)-[(R)-dihydrolipoyl]-L-lysyl-[protein] + 4 Fe(3+) + 2 hydrogen sulfide + 2 5'-deoxyadenosine + 2 L-methionine + 2 reduced [2Fe-2S]-[ferredoxin]. The protein operates within protein modification; protein lipoylation via endogenous pathway; protein N(6)-(lipoyl)lysine from octanoyl-[acyl-carrier-protein]: step 2/2. Functionally, catalyzes the radical-mediated insertion of two sulfur atoms into the C-6 and C-8 positions of the octanoyl moiety bound to the lipoyl domains of lipoate-dependent enzymes, thereby converting the octanoylated domains into lipoylated derivatives. This chain is Lipoyl synthase, mitochondrial, found in Neosartorya fischeri (strain ATCC 1020 / DSM 3700 / CBS 544.65 / FGSC A1164 / JCM 1740 / NRRL 181 / WB 181) (Aspergillus fischerianus).